The primary structure comprises 412 residues: Kelch repeat-containing protein At1g19470 (412 aa).

Residues 1-55 are disordered; sequence MVNISEIPDDSNDGCDPNKKPEEQVLRRSRRIATRNENQNKKPKEEEEEDNRSVS. Positions 16–26 are enriched in basic and acidic residues; that stretch reads DPNKKPEEQVL. 4 Kelch repeats span residues 156 to 202, 203 to 250, 255 to 291, and 292 to 345; these read EMYV…VVDG, KIYV…SAHA, KLYMLGSKFCLVYEPKRNGEWDASVGATPLKDLWDKT, and CCVV…EMAN.

In Arabidopsis thaliana (Mouse-ear cress), this protein is Kelch repeat-containing protein At1g19470.